A 302-amino-acid chain; its full sequence is N-acetylmuramic acid 6-phosphate etherase (302 aa).

One can recognise an SIS domain in the interval 58 to 221 (IGESFLNGGR…STGAMVKTGK (164 aa)). Glu86 functions as the Proton donor in the catalytic mechanism. The active site involves Glu117.

It belongs to the GCKR-like family. MurNAc-6-P etherase subfamily. As to quaternary structure, homodimer.

The catalysed reaction is N-acetyl-D-muramate 6-phosphate + H2O = N-acetyl-D-glucosamine 6-phosphate + (R)-lactate. It functions in the pathway amino-sugar metabolism; N-acetylmuramate degradation. Specifically catalyzes the cleavage of the D-lactyl ether substituent of MurNAc 6-phosphate, producing GlcNAc 6-phosphate and D-lactate. The sequence is that of N-acetylmuramic acid 6-phosphate etherase from Clostridium botulinum (strain Okra / Type B1).